The sequence spans 174 residues: Small ribosomal subunit protein uS5 (174 aa).

One can recognise an S5 DRBM domain in the interval 19–82 (LREKMVAINR…DEARRKMVKV (64 aa)).

It belongs to the universal ribosomal protein uS5 family. As to quaternary structure, part of the 30S ribosomal subunit. Contacts proteins S4 and S8.

Its function is as follows. With S4 and S12 plays an important role in translational accuracy. Located at the back of the 30S subunit body where it stabilizes the conformation of the head with respect to the body. In Azoarcus sp. (strain BH72), this protein is Small ribosomal subunit protein uS5.